The chain runs to 365 residues: Heme A synthase (365 aa).

Transmembrane regions (helical) follow at residues 17–37 (AVRIWLTVVAALIAVMVLVGG), 107–127 (VIGIAYLLPFLWFLWRGAIGP), 132–152 (ALWGIFALGALQGAVGWWMVA), 164–184 (VRLAVHLTLALIIYAAIVWTL), 203–223 (AIALLALTLLQLFLGALVAGL), 264–283 (QFDHRMMAYALWALAAWHAI), 296–316 (GALWLFAALSLQAVLGILTVL), and 320–340 (PIGLALAHQAVGIVVLTLAVL). His-267 contributes to the heme binding site. His-327 is a binding site for heme.

It belongs to the COX15/CtaA family. Type 2 subfamily. Interacts with CtaB. It depends on heme b as a cofactor.

Its subcellular location is the cell membrane. It catalyses the reaction Fe(II)-heme o + 2 A + H2O = Fe(II)-heme a + 2 AH2. Its pathway is porphyrin-containing compound metabolism; heme A biosynthesis; heme A from heme O: step 1/1. Functionally, catalyzes the conversion of heme O to heme A by two successive hydroxylations of the methyl group at C8. The first hydroxylation forms heme I, the second hydroxylation results in an unstable dihydroxymethyl group, which spontaneously dehydrates, resulting in the formyl group of heme A. This chain is Heme A synthase, found in Rhodopseudomonas palustris (strain HaA2).